A 437-amino-acid polypeptide reads, in one-letter code: Phosphomethylpyrimidine synthase (437 aa).

Residues Asn-69, Met-98, Tyr-127, His-163, 185–187 (SRG), 226–229 (DACR), and Glu-265 each bind substrate. Position 269 (His-269) interacts with Zn(2+). Tyr-292 contributes to the substrate binding site. His-333 lines the Zn(2+) pocket. Positions 409, 412, and 416 each coordinate [4Fe-4S] cluster.

The protein belongs to the ThiC family. [4Fe-4S] cluster serves as cofactor.

The catalysed reaction is 5-amino-1-(5-phospho-beta-D-ribosyl)imidazole + S-adenosyl-L-methionine = 4-amino-2-methyl-5-(phosphooxymethyl)pyrimidine + CO + 5'-deoxyadenosine + formate + L-methionine + 3 H(+). Its pathway is cofactor biosynthesis; thiamine diphosphate biosynthesis. In terms of biological role, catalyzes the synthesis of the hydroxymethylpyrimidine phosphate (HMP-P) moiety of thiamine from aminoimidazole ribotide (AIR) in a radical S-adenosyl-L-methionine (SAM)-dependent reaction. This Clostridium kluyveri (strain NBRC 12016) protein is Phosphomethylpyrimidine synthase.